We begin with the raw amino-acid sequence, 453 residues long: Tol-Pal system protein TolB (453 aa).

A signal peptide spans 1 to 31 (MINNLSISMTKVIKIILAIIIILFNTLSIFA).

Belongs to the TolB family. In terms of assembly, the Tol-Pal system is composed of five core proteins: the inner membrane proteins TolA, TolQ and TolR, the periplasmic protein TolB and the outer membrane protein Pal. They form a network linking the inner and outer membranes and the peptidoglycan layer.

The protein localises to the periplasm. Functionally, part of the Tol-Pal system, which plays a role in outer membrane invagination during cell division and is important for maintaining outer membrane integrity. This Orientia tsutsugamushi (strain Ikeda) (Rickettsia tsutsugamushi) protein is Tol-Pal system protein TolB.